Consider the following 691-residue polypeptide: DNA ligase (691 aa).

NAD(+) is bound by residues 41-45 (DAEYD), 90-91 (SL), and E130. K132 (N6-AMP-lysine intermediate) is an active-site residue. Residues R153, E190, K307, and K331 each coordinate NAD(+). Residues C425, C428, C443, and C449 each coordinate Zn(2+). The BRCT domain occupies 610-691 (APQGVLAGKT…MHTLLEGHAR (82 aa)).

It belongs to the NAD-dependent DNA ligase family. LigA subfamily. The cofactor is Mg(2+). Mn(2+) serves as cofactor.

The catalysed reaction is NAD(+) + (deoxyribonucleotide)n-3'-hydroxyl + 5'-phospho-(deoxyribonucleotide)m = (deoxyribonucleotide)n+m + AMP + beta-nicotinamide D-nucleotide.. Functionally, DNA ligase that catalyzes the formation of phosphodiester linkages between 5'-phosphoryl and 3'-hydroxyl groups in double-stranded DNA using NAD as a coenzyme and as the energy source for the reaction. It is essential for DNA replication and repair of damaged DNA. The protein is DNA ligase of Burkholderia pseudomallei (strain K96243).